Consider the following 348-residue polypeptide: MQNNNPCGLDGFAFLEFSGPDRNKLHQQFSEMGFQAVAHHKNQDITLFKQGEIQFIVNAASHCQAEAHASTHGPGACAMGFKVKDAKAAFQHAIAHGGIAFQDAPHANHGLPAIQAIGGSVIYFVDEEHQPFSHEWNITSPEPVVGNGLTAIDHLTHNVYRGNMDKWASFYASIFNFQEIRFFNIKGKMTGLVSRALGSPCGKIKIPLNESKDDLSQIEEFLHEYHGEGIQHIALNTNDIYKTVNGLRKQGVKFLDVPDTYYEMINDRLPWHKEPLNQLHAEKILIDGEADPKDGLLLQIFTENIFGPVFFEIIQRKGNQGFGEGNFQALFEAIERDQVRRGTLKELS.

VOC domains are found at residues 11–141 and 151–303; these read GFAF…ITSP and AIDH…IFTE. H154, H232, and E312 together coordinate Fe cation.

Belongs to the 4HPPD family. It depends on Fe cation as a cofactor.

It carries out the reaction 3-(4-hydroxyphenyl)pyruvate + O2 = homogentisate + CO2. Functionally, catalyzes the transformation of p-hydroxyphenylpyruvate into HGA. Has hemolytic and brown pigment production activity. This Legionella pneumophila subsp. pneumophila (strain Philadelphia 1 / ATCC 33152 / DSM 7513) protein is 4-hydroxyphenylpyruvate dioxygenase (lly).